Consider the following 482-residue polypeptide: ATP synthase subunit beta (482 aa).

Glycine 168–threonine 175 is a binding site for ATP.

This sequence belongs to the ATPase alpha/beta chains family. F-type ATPases have 2 components, CF(1) - the catalytic core - and CF(0) - the membrane proton channel. CF(1) has five subunits: alpha(3), beta(3), gamma(1), delta(1), epsilon(1). CF(0) has three main subunits: a(1), b(2) and c(9-12). The alpha and beta chains form an alternating ring which encloses part of the gamma chain. CF(1) is attached to CF(0) by a central stalk formed by the gamma and epsilon chains, while a peripheral stalk is formed by the delta and b chains.

The protein localises to the cell membrane. The enzyme catalyses ATP + H2O + 4 H(+)(in) = ADP + phosphate + 5 H(+)(out). Produces ATP from ADP in the presence of a proton gradient across the membrane. The catalytic sites are hosted primarily by the beta subunits. The protein is ATP synthase subunit beta of Nocardia farcinica (strain IFM 10152).